Here is a 497-residue protein sequence, read N- to C-terminus: Glutamyl-tRNA(Gln) amidotransferase subunit A (497 aa).

Active-site charge relay system residues include lysine 80 and serine 155. Serine 179 functions as the Acyl-ester intermediate in the catalytic mechanism.

Belongs to the amidase family. GatA subfamily. As to quaternary structure, heterotrimer of A, B and C subunits.

The enzyme catalyses L-glutamyl-tRNA(Gln) + L-glutamine + ATP + H2O = L-glutaminyl-tRNA(Gln) + L-glutamate + ADP + phosphate + H(+). Its function is as follows. Allows the formation of correctly charged Gln-tRNA(Gln) through the transamidation of misacylated Glu-tRNA(Gln) in organisms which lack glutaminyl-tRNA synthetase. The reaction takes place in the presence of glutamine and ATP through an activated gamma-phospho-Glu-tRNA(Gln). This is Glutamyl-tRNA(Gln) amidotransferase subunit A (gatA) from Streptomyces coelicolor (strain ATCC BAA-471 / A3(2) / M145).